The following is a 29-amino-acid chain: Cytochrome b6-f complex subunit 8 (29 aa).

The helical transmembrane segment at 3 to 23 threads the bilayer; the sequence is IVSIAWAALMVVFSFSLSLVV.

Belongs to the PetN family. As to quaternary structure, the 4 large subunits of the cytochrome b6-f complex are cytochrome b6, subunit IV (17 kDa polypeptide, PetD), cytochrome f and the Rieske protein, while the 4 small subunits are PetG, PetL, PetM and PetN. The complex functions as a dimer.

Its subcellular location is the plastid. It localises to the chloroplast thylakoid membrane. Component of the cytochrome b6-f complex, which mediates electron transfer between photosystem II (PSII) and photosystem I (PSI), cyclic electron flow around PSI, and state transitions. The polypeptide is Cytochrome b6-f complex subunit 8 (Phaseolus vulgaris (Kidney bean)).